The sequence spans 145 residues: Putative pre-16S rRNA nuclease (145 aa).

Belongs to the YqgF nuclease family.

It localises to the cytoplasm. In terms of biological role, could be a nuclease involved in processing of the 5'-end of pre-16S rRNA. In Opitutus terrae (strain DSM 11246 / JCM 15787 / PB90-1), this protein is Putative pre-16S rRNA nuclease.